A 630-amino-acid polypeptide reads, in one-letter code: MSSTQEKPEELDRIQKRVNKILEARLESDKDTLDALSGLSTFFTENTLQNRRNLRSQIEHRSVGINENFLKAFRQVKLSLDAVCEDLDTMATSVETMKSDLETSKALTKDLIKQTNTMQRERDRLEVHKQIAQAFLARFQLSGAEHQLLYGAAKDAPIVADFFRVLDRVQSIHADCRLLMQCGYQTAAIDIMEEMTLHQEGALERLYRWTQNHCRSLENNEIGPLIVEAMSRLQDRPVLFKYVIDEYAIARRAVLVRQFIEALTEGGPGGNPKPIELHAHDPKRYIGDMFAWLHQSIPTEKENLSLLFKKCDKQDISDQLQNALGYIADGVCHPLKVRVETILQAEKDTIVLFTISNLLRFYQQIMRQVVQGGSLEECLVELQKSSEQIYLGALAAQVRSVLQRPSGGSGLALEPPQRDLVPPPSVARLLNMLKEILSVATMVDGRQADITKIVSCVIDPLLQSVQESAAHLPTVDMGVYLLNCLHHMQSSLAVYEYMDERVERLQAQSDAQLDTLTSEQASSLVANLNLGPIYAILQSNQSKIETNLLKIFMSKMDAFLELPDVLLLPQVQLIMSSSHRAAVQKRSFNVIVAIYKQIYERVHDPANGFEQPEQLLHRTPEQVAHILTST.

It belongs to the COG6 family. Component of the conserved oligomeric Golgi complex which is composed of eight different subunits and is required for normal Golgi morphology and localization.

It localises to the golgi apparatus membrane. In terms of biological role, required for normal Golgi function. The polypeptide is Conserved oligomeric Golgi complex subunit 6 (Drosophila melanogaster (Fruit fly)).